Here is a 358-residue protein sequence, read N- to C-terminus: PqqA peptide cyclase (358 aa).

Positions 4–219 (PSPPMSLLAE…VEAERAKGGL (216 aa)) constitute a Radical SAM core domain. Residues cysteine 18, cysteine 22, and cysteine 25 each contribute to the [4Fe-4S] cluster site.

This sequence belongs to the radical SAM superfamily. PqqE family. In terms of assembly, interacts with PqqD. The interaction is necessary for activity of PqqE. Requires [4Fe-4S] cluster as cofactor.

The catalysed reaction is [PQQ precursor protein] + S-adenosyl-L-methionine = E-Y cross-linked-[PQQ precursor protein] + 5'-deoxyadenosine + L-methionine + H(+). It functions in the pathway cofactor biosynthesis; pyrroloquinoline quinone biosynthesis. Functionally, catalyzes the cross-linking of a glutamate residue and a tyrosine residue in the PqqA protein as part of the biosynthesis of pyrroloquinoline quinone (PQQ). The polypeptide is PqqA peptide cyclase (Gluconobacter oxydans (strain 621H) (Gluconobacter suboxydans)).